A 237-amino-acid chain; its full sequence is MRRVTRNGVLAVAASGALAVTMPAYAAFASDGAGAEGSAAGSPGLISGNTVQLPVDVPVDVCGNTVNVVGLLNPAAGNGCADSGEPGASYQAAGASGGTSGSATEATSGGAAAEGSGKDSPGVLSGNGVQLPVHLPVNVSGNSVNVVGIGNPAVGNESTNDSGDHPEPVRPPAEPEPSAPEEERAGPGPSAHAAPPREEVSLAHTGTDRTLPTLAGGAALVLGGTVLYRRFRPGSGD.

A signal peptide spans 1 to 26 (MRRVTRNGVLAVAASGALAVTMPAYA). The Chaplin 1 domain occupies 42-82 (SPGLISGNTVQLPVDVPVDVCGNTVNVVGLLNPAAGNGCAD). 2 disordered regions span residues 81–127 (ADSG…LSGN) and 148–216 (GIGN…TLAG). A compositionally biased stretch (low complexity) spans 101-115 (GSATEATSGGAAAEG). The Chaplin 2 domain occupies 120-160 (SPGVLSGNGVQLPVHLPVNVSGNSVNVVGIGNPAVGNESTN). Residues 169 to 178 (VRPPAEPEPS) are compositionally biased toward pro residues. The short motif at 202-206 (LAHTG) is the LPXTG sorting signal element. Residue Thr-205 is modified to Pentaglycyl murein peptidoglycan amidated threonine. A propeptide spans 206 to 237 (GTDRTLPTLAGGAALVLGGTVLYRRFRPGSGD) (removed by sortase).

It belongs to the chaplin family. Long chaplin subfamily.

It localises to the secreted. The protein resides in the cell wall. Its function is as follows. One of 8 partially redundant surface-active proteins required for efficient formation of aerial mycelium; the short chaplins assemble into a hydrophobic, amyloidal fibrillar surface layer that envelopes and protects aerial hyphae and spores, presumably anchored to the long chaplins. Chaplins have an overlapping function with the surface-active SapB peptide; chaplins are essential on minimal medium while on rich medium both chaplins and SapB are required for efficient aerial hyphae formation. The long chaplins (ChpA, ChpB, ChpC) are not absolutely necessary for short chaplin localization or rodlet formation, but probably play a role in initiating aerial hyphae development. Chaplins are also involved in cell attachment to a hydrophobic surface. This Streptomyces coelicolor (strain ATCC BAA-471 / A3(2) / M145) protein is Chaplin-B.